We begin with the raw amino-acid sequence, 431 residues long: Trigger factor (431 aa).

Positions 165 to 250 (TDTAVFDFEG…LHQIKTKKIP (86 aa)) constitute a PPIase FKBP-type domain.

This sequence belongs to the FKBP-type PPIase family. Tig subfamily.

It is found in the cytoplasm. It carries out the reaction [protein]-peptidylproline (omega=180) = [protein]-peptidylproline (omega=0). In terms of biological role, involved in protein export. Acts as a chaperone by maintaining the newly synthesized protein in an open conformation. Functions as a peptidyl-prolyl cis-trans isomerase. The polypeptide is Trigger factor (Aster yellows witches'-broom phytoplasma (strain AYWB)).